Consider the following 1152-residue polypeptide: Fork-head transcriptional regulator FHL1 (1152 aa).

The tract at residues 55–147 is disordered; that stretch reads TATNNVLPES…SEDDNNNNNN (93 aa). The segment covering 64-83 has biased composition (basic and acidic residues); the sequence is SNKKDKPIDTQDLHEDDPKA. Low complexity predominate over residues 87-101; sequence TTSNGESTSNSNSVS. Over residues 126-135 the composition is skewed to polar residues; sequence VPVTSNSKSL. The 59-residue stretch at 171–229 folds into the FHA domain; that stretch reads VVLGRKSNDETLQQNVDVHLSSKKAISRRHAKIFYNFGTQRFEISILGRNGAFVDNVFV. 2 disordered regions span residues 254–362 and 514–557; these read LPSN…RKNS and KKQL…PPAS. Over residues 271 to 286 the composition is skewed to polar residues; that stretch reads KQFNPSDAINLRSNLY. Residues 296-307 are compositionally biased toward basic residues; that stretch reads PKRKPQPSKKVK. The span at 328–358 shows a compositional bias: low complexity; that stretch reads TTAISPTASISTSTNAATAATATTPATTTAA. 2 coiled-coil regions span residues 449–537 and 734–777; these read DDDE…SLAK and ELYI…QKSL. Positions 659 to 756 form a DNA-binding region, fork-head; it reads KPNISFQIMI…QREIAKAKAK (98 aa). Disordered stretches follow at residues 787–833, 846–867, 951–1010, and 1057–1152; these read ASPY…GTSP, RGNG…MNDP, HEGI…VPQQ, and PAMQ…AKTE. 3 stretches are compositionally biased toward low complexity: residues 804 to 826, 851 to 863, and 973 to 987; these read SQSS…GSTT, TPAT…SLPA, and TTTS…TTPQ. 2 stretches are compositionally biased toward pro residues: residues 996-1006 and 1072-1082; these read VKPPISTPLPQ and TSVPVPLPVPS. 2 stretches are compositionally biased toward polar residues: residues 1115-1128 and 1143-1152; these read SSLS…SNKP and QATNKIAKTE.

Interacts with IFH1 and TBF1.

It localises to the nucleus. In complex with IFH1, acts as a transcriptional regulator of rRNA and ribosomal protein genes. The FHL1-IFH1 complex is targeted to the ribosomal protein genes by the DNA-binding factor TBF1. The chain is Fork-head transcriptional regulator FHL1 (FHL1) from Candida albicans (strain SC5314 / ATCC MYA-2876) (Yeast).